A 370-amino-acid chain; its full sequence is Aminomethyltransferase (370 aa).

Belongs to the GcvT family. As to quaternary structure, the glycine cleavage system is composed of four proteins: P, T, L and H.

It catalyses the reaction N(6)-[(R)-S(8)-aminomethyldihydrolipoyl]-L-lysyl-[protein] + (6S)-5,6,7,8-tetrahydrofolate = N(6)-[(R)-dihydrolipoyl]-L-lysyl-[protein] + (6R)-5,10-methylene-5,6,7,8-tetrahydrofolate + NH4(+). The glycine cleavage system catalyzes the degradation of glycine. This is Aminomethyltransferase from Corynebacterium aurimucosum (strain ATCC 700975 / DSM 44827 / CIP 107346 / CN-1) (Corynebacterium nigricans).